A 314-amino-acid chain; its full sequence is 3'-5' exoribonuclease YhaM (314 aa).

The OB DNA-binding region spans 22 to 90 (SSTKGIASNG…QLKLRNIRPV (69 aa)). One can recognise an HD domain in the interval 163 to 279 (HVVSMLNLAK…LHYIDNLDAK (117 aa)).

Belongs to the YhaM family. Mn(2+) is required as a cofactor. It depends on Co(2+) as a cofactor.

Its function is as follows. Shows a 3'-5' exoribonuclease activity as well as single-stranded DNA 3'-5'exonuclease activity. Plays a role in the secondary pathway of 23S rRNA 3' end maturation. The chain is 3'-5' exoribonuclease YhaM from Bacillus subtilis (strain 168).